A 428-amino-acid chain; its full sequence is Adenylosuccinate synthetase (428 aa).

GTP is bound by residues 12–18 (GDEGKGK) and 40–42 (GHT). Catalysis depends on aspartate 13, which acts as the Proton acceptor. Residues aspartate 13 and glycine 40 each coordinate Mg(2+). Residues 13–16 (DEGK), 38–41 (NAGH), threonine 128, arginine 142, glutamine 223, threonine 238, and arginine 302 contribute to the IMP site. Histidine 41 (proton donor) is an active-site residue. Position 298–304 (298–304 (VTTGRPR)) interacts with substrate. GTP contacts are provided by residues arginine 304, 330 to 332 (KLD), and 413 to 415 (GVG).

The protein belongs to the adenylosuccinate synthetase family. In terms of assembly, homodimer. The cofactor is Mg(2+).

It is found in the cytoplasm. It catalyses the reaction IMP + L-aspartate + GTP = N(6)-(1,2-dicarboxyethyl)-AMP + GDP + phosphate + 2 H(+). It participates in purine metabolism; AMP biosynthesis via de novo pathway; AMP from IMP: step 1/2. Functionally, plays an important role in the de novo pathway of purine nucleotide biosynthesis. Catalyzes the first committed step in the biosynthesis of AMP from IMP. In Acidothermus cellulolyticus (strain ATCC 43068 / DSM 8971 / 11B), this protein is Adenylosuccinate synthetase.